We begin with the raw amino-acid sequence, 663 residues long: Oxytetracycline resistance protein (663 aa).

In terms of domain architecture, tr-type G spans 1-252 (MNKLNLGILA…GIRELLPSVH (252 aa)). GTP is bound by residues 10 to 17 (AHVDAGKT), 74 to 78 (DTPGH), and 128 to 131 (NKID).

The protein belongs to the TRAFAC class translation factor GTPase superfamily. Classic translation factor GTPase family. TetM/TetO subfamily.

Functionally, abolishes the inhibitory effect of oxytetracycline on protein synthesis by a non-covalent modification of the ribosomes. In Streptomyces rimosus, this protein is Oxytetracycline resistance protein (otrA).